The following is a 568-amino-acid chain: Sulfite reductase [NADPH] hemoprotein beta-component (568 aa).

Residues Cys-426, Cys-432, Cys-471, and Cys-475 each contribute to the [4Fe-4S] cluster site. Cys-475 contributes to the siroheme binding site.

It belongs to the nitrite and sulfite reductase 4Fe-4S domain family. As to quaternary structure, alpha(8)-beta(8). The alpha component is a flavoprotein, the beta component is a hemoprotein. It depends on siroheme as a cofactor. Requires [4Fe-4S] cluster as cofactor.

The catalysed reaction is hydrogen sulfide + 3 NADP(+) + 3 H2O = sulfite + 3 NADPH + 4 H(+). Its pathway is sulfur metabolism; hydrogen sulfide biosynthesis; hydrogen sulfide from sulfite (NADPH route): step 1/1. In terms of biological role, component of the sulfite reductase complex that catalyzes the 6-electron reduction of sulfite to sulfide. This is one of several activities required for the biosynthesis of L-cysteine from sulfate. This is Sulfite reductase [NADPH] hemoprotein beta-component from Xylella fastidiosa (strain M12).